The primary structure comprises 558 residues: Potassium-transporting ATPase potassium-binding subunit (558 aa).

The next 12 helical transmembrane spans lie at 1–21, 66–86, 127–147, 166–186, 245–265, 281–301, 327–347, 354–374, 377–397, 416–436, 482–502, and 531–551; these read MEII…SGYL, FNGF…WLFL, MIVM…VCIA, IVRF…ILLM, IWSD…MLFL, ALIL…LTMW, FGAG…TGSV, LTPL…VFGG, VGLM…SLMV, IVLV…LAFM, ISTG…QLLI, and IVFI…LGPI.

The protein belongs to the KdpA family. As to quaternary structure, the system is composed of three essential subunits: KdpA, KdpB and KdpC.

The protein resides in the cell membrane. In terms of biological role, part of the high-affinity ATP-driven potassium transport (or Kdp) system, which catalyzes the hydrolysis of ATP coupled with the electrogenic transport of potassium into the cytoplasm. This subunit binds the extracellular potassium ions and delivers the ions to the membrane domain of KdpB through an intramembrane tunnel. The protein is Potassium-transporting ATPase potassium-binding subunit of Staphylococcus aureus (strain bovine RF122 / ET3-1).